The sequence spans 88 residues: UPF0213 protein EF_2693 (88 aa).

Residues 5–82 (KSHYFYVLLC…KKLTRKQKEQ (78 aa)) enclose the GIY-YIG domain.

It belongs to the UPF0213 family.

The protein is UPF0213 protein EF_2693 of Enterococcus faecalis (strain ATCC 700802 / V583).